Here is a 245-residue protein sequence, read N- to C-terminus: Octanoyltransferase (245 aa).

The BPL/LPL catalytic domain maps to 54-242 (QNAHEQVWLL…SFEQIFGPII (189 aa)). Substrate is bound by residues 93-100 (RGGEFTYH), 173-175 (AIG), and 186-188 (GVS). C204 functions as the Acyl-thioester intermediate in the catalytic mechanism.

The protein belongs to the LipB family.

It is found in the cytoplasm. The enzyme catalyses octanoyl-[ACP] + L-lysyl-[protein] = N(6)-octanoyl-L-lysyl-[protein] + holo-[ACP] + H(+). Its pathway is protein modification; protein lipoylation via endogenous pathway; protein N(6)-(lipoyl)lysine from octanoyl-[acyl-carrier-protein]: step 1/2. Catalyzes the transfer of endogenously produced octanoic acid from octanoyl-acyl-carrier-protein onto the lipoyl domains of lipoate-dependent enzymes. Lipoyl-ACP can also act as a substrate although octanoyl-ACP is likely to be the physiological substrate. The polypeptide is Octanoyltransferase (Bartonella henselae (strain ATCC 49882 / DSM 28221 / CCUG 30454 / Houston 1) (Rochalimaea henselae)).